The chain runs to 362 residues: Peptide chain release factor 1 (362 aa).

Position 236 is an N5-methylglutamine (Q236).

The protein belongs to the prokaryotic/mitochondrial release factor family. Methylated by PrmC. Methylation increases the termination efficiency of RF1.

It is found in the cytoplasm. Its function is as follows. Peptide chain release factor 1 directs the termination of translation in response to the peptide chain termination codons UAG and UAA. The sequence is that of Peptide chain release factor 1 from Lactobacillus johnsonii (strain CNCM I-12250 / La1 / NCC 533).